We begin with the raw amino-acid sequence, 411 residues long: Ornithine aminotransferase (411 aa).

N6-(pyridoxal phosphate)lysine is present on Lys257.

This sequence belongs to the class-III pyridoxal-phosphate-dependent aminotransferase family. OAT subfamily. Pyridoxal 5'-phosphate is required as a cofactor.

The protein localises to the cytoplasm. The catalysed reaction is a 2-oxocarboxylate + L-ornithine = L-glutamate 5-semialdehyde + an L-alpha-amino acid. Its pathway is amino-acid biosynthesis; L-proline biosynthesis; L-glutamate 5-semialdehyde from L-ornithine: step 1/1. In terms of biological role, catalyzes the interconversion of ornithine to glutamate semialdehyde. The chain is Ornithine aminotransferase from Bordetella bronchiseptica (strain ATCC BAA-588 / NCTC 13252 / RB50) (Alcaligenes bronchisepticus).